A 289-amino-acid polypeptide reads, in one-letter code: Agmatinase (289 aa).

His112, Asp135, His137, Asp139, Asp216, and Asp218 together coordinate Mn(2+).

The protein belongs to the arginase family. Agmatinase subfamily. Requires Mn(2+) as cofactor.

The enzyme catalyses agmatine + H2O = urea + putrescine. It functions in the pathway amine and polyamine biosynthesis; putrescine biosynthesis via agmatine pathway; putrescine from agmatine: step 1/1. In terms of biological role, catalyzes the formation of putrescine from agmatine. This chain is Agmatinase (speB), found in Halalkalibacterium halodurans (strain ATCC BAA-125 / DSM 18197 / FERM 7344 / JCM 9153 / C-125) (Bacillus halodurans).